The sequence spans 233 residues: NAD-dependent protein deacylase (233 aa).

The Deacetylase sirtuin-type domain occupies 1–230; that stretch reads MKNIMILSGA…ALDIENFMKD (230 aa). 9-28 serves as a coordination point for NAD(+); the sequence is GAGLSAPSGLKTFRDNDGLW. Substrate is bound by residues Y53 and R56. 88-91 is an NAD(+) binding site; that stretch reads QNVD. Catalysis depends on H106, which acts as the Proton acceptor. Residues C114, C117, C133, and C136 each contribute to the Zn(2+) site. NAD(+) contacts are provided by residues 172 to 174 and 200 to 202; these read GTS and NLE.

It belongs to the sirtuin family. Class III subfamily. Zn(2+) is required as a cofactor.

It localises to the cytoplasm. The enzyme catalyses N(6)-acetyl-L-lysyl-[protein] + NAD(+) + H2O = 2''-O-acetyl-ADP-D-ribose + nicotinamide + L-lysyl-[protein]. The catalysed reaction is N(6)-succinyl-L-lysyl-[protein] + NAD(+) + H2O = 2''-O-succinyl-ADP-D-ribose + nicotinamide + L-lysyl-[protein]. Its function is as follows. NAD-dependent lysine deacetylase and desuccinylase that specifically removes acetyl and succinyl groups on target proteins. Modulates the activities of several proteins which are inactive in their acylated form. This chain is NAD-dependent protein deacylase, found in Campylobacter jejuni subsp. jejuni serotype O:2 (strain ATCC 700819 / NCTC 11168).